The primary structure comprises 307 residues: Probable porphobilinogen deaminase (307 aa).

Cys-240 is modified (S-(dipyrrolylmethanemethyl)cysteine).

It belongs to the HMBS family. Dipyrromethane serves as cofactor.

The catalysed reaction is 4 porphobilinogen + H2O = hydroxymethylbilane + 4 NH4(+). The protein operates within porphyrin-containing compound metabolism; protoporphyrin-IX biosynthesis; coproporphyrinogen-III from 5-aminolevulinate: step 2/4. Functionally, tetrapolymerization of the monopyrrole PBG into the hydroxymethylbilane pre-uroporphyrinogen in several discrete steps. This chain is Probable porphobilinogen deaminase (hemC), found in Aeropyrum pernix (strain ATCC 700893 / DSM 11879 / JCM 9820 / NBRC 100138 / K1).